A 274-amino-acid chain; its full sequence is Copper chaperone for superoxide dismutase (274 aa).

One can recognise an HMA domain in the interval 11-74 (MCALEFTVQM…LLESTGRQAV (64 aa)). Residues cysteine 22 and cysteine 25 each contribute to the Cu cation site. A Glycyl lysine isopeptide (Lys-Gly) (interchain with G-Cter in ubiquitin) cross-link involves residue lysine 76. Residues 88 to 234 (AAVAIMEGSG…LACGIIARSA (147 aa)) form a superoxide dismutase-like region. Cysteine 141 and cysteine 227 are disulfide-bonded. The Zn(2+) site is built by histidine 147, histidine 155, histidine 164, and aspartate 167. Glycyl lysine isopeptide (Lys-Gly) (interchain with G-Cter in ubiquitin) cross-links involve residues lysine 189, lysine 216, and lysine 241. Cu cation is bound by residues cysteine 244 and cysteine 246. A Phosphoserine modification is found at serine 267.

The protein in the C-terminal section; belongs to the Cu-Zn superoxide dismutase family. As to quaternary structure, homodimer, and heterodimer with SOD1. Interacts with COMMD1. Interacts with XIAP/BIRC4. Interacts with SLC31A1(via C-terminal domain); this interaction is Cu(1+)-mediated. The heterodimer CCS:SOD1 interacts with SLC31A1; this heterotrimer is Cu(1+)-mediated and its maintenance is regulated through SOD1 activation. Requires Cu(2+) as cofactor. Zn(2+) is required as a cofactor. Ubiquitinion by XIAP/BIRC4 leads to enhancement of its chaperone activity toward its physiologic target, SOD1, rather than proteasomal degradation. XIAP/BIRC4 preferentially ubiquitinates at Lys-241.

It is found in the cytoplasm. Its function is as follows. Delivers copper to copper zinc superoxide dismutase (SOD1). The chain is Copper chaperone for superoxide dismutase from Rattus norvegicus (Rat).